Consider the following 445-residue polypeptide: MSERKYFGTDGIRGKVGDTPITPEFVLKLGWAAGKVLARHGSRKIIIGKDTRISGYMLESALEAGLAAAGLSASFTGPMPTPAVAYLTRTFRAEAGIVISASHNPFYDNGIKFFSIDGAKLPDDVEEAIEAEMEKPLTCVESSELGKASRIIDAAGRYIEFCKGTFPSELSLKGLKIVVDCANGATYHIAPSVLRELGATVIAIGVEPDGMNINEKCGATDVRQLQERVLQEKAHVGLAFDGDGDRVMMVDHLGNKVDGDQILYIIAREGLRQGQLRGGAVGTLMSNMGLELALKQLGIPFARAKVGDRYVLEKLQELGWRIGAENSGHVILLDKTTTGDGIVAGLQVLTAIVRNSMSLHDLCSGMKLLPQILVNVRFAGEHNPLESEEVRKITEQVEVELAGRGRVLLRKSGTEPLIRVMVEGEDEQQVTALAHRIADAVKSAG.

Catalysis depends on S102, which acts as the Phosphoserine intermediate. Mg(2+) contacts are provided by S102, D241, D243, and D245. S102 carries the phosphoserine modification.

The protein belongs to the phosphohexose mutase family. Mg(2+) is required as a cofactor. Activated by phosphorylation.

The catalysed reaction is alpha-D-glucosamine 1-phosphate = D-glucosamine 6-phosphate. Catalyzes the conversion of glucosamine-6-phosphate to glucosamine-1-phosphate. This Serratia proteamaculans (strain 568) protein is Phosphoglucosamine mutase.